A 106-amino-acid chain; its full sequence is Nucleoid-associated protein Fjoh_2555 (106 aa).

The protein belongs to the YbaB/EbfC family. Homodimer.

The protein localises to the cytoplasm. It localises to the nucleoid. In terms of biological role, binds to DNA and alters its conformation. May be involved in regulation of gene expression, nucleoid organization and DNA protection. In Flavobacterium johnsoniae (strain ATCC 17061 / DSM 2064 / JCM 8514 / BCRC 14874 / CCUG 350202 / NBRC 14942 / NCIMB 11054 / UW101) (Cytophaga johnsonae), this protein is Nucleoid-associated protein Fjoh_2555.